The chain runs to 220 residues: Iron-sulfur cluster repair protein YtfE (220 aa).

Belongs to the RIC family. YtfE subfamily. Homodimer.

Its subcellular location is the cytoplasm. In terms of biological role, di-iron-containing protein involved in the repair of iron-sulfur clusters damaged by oxidative and nitrosative stress conditions. This is Iron-sulfur cluster repair protein YtfE from Enterobacter sp. (strain 638).